A 90-amino-acid polypeptide reads, in one-letter code: MANIKSSEKDIRRTKRRNAANSQNRSRLRTQAKKILKAIKEKDPKAAMALFIEYTSFLDKAAKTNLIHSKNADRKKSRMAKRLNAVFAAA.

Residues 1–11 show a composition bias toward basic and acidic residues; that stretch reads MANIKSSEKDI. The interval 1 to 29 is disordered; that stretch reads MANIKSSEKDIRRTKRRNAANSQNRSRLR.

This sequence belongs to the bacterial ribosomal protein bS20 family.

Its function is as follows. Binds directly to 16S ribosomal RNA. This Leptospira borgpetersenii serovar Hardjo-bovis (strain JB197) protein is Small ribosomal subunit protein bS20.